A 623-amino-acid chain; its full sequence is V-type proton ATPase catalytic subunit A (623 aa).

Position 252-259 (252-259 (GAFGCGKT)) interacts with ATP.

This sequence belongs to the ATPase alpha/beta chains family. In terms of assembly, V-ATPase is a heteromultimeric enzyme composed of a peripheral catalytic V1 complex (components A to H) attached to an integral membrane V0 proton pore complex (components: a, c, c'', d and e). Binds to the deubiquitinating enzyme AMSH3.

It is found in the vacuole membrane. The enzyme catalyses ATP + H2O + 4 H(+)(in) = ADP + phosphate + 5 H(+)(out). In terms of biological role, catalytic subunit of the peripheral V1 complex of vacuolar ATPase. V-ATPase vacuolar ATPase is responsible for acidifying a variety of intracellular compartments in eukaryotic cells. This chain is V-type proton ATPase catalytic subunit A (VHA-A), found in Arabidopsis thaliana (Mouse-ear cress).